The chain runs to 440 residues: Putative epoxide hydrolase (440 aa).

The disordered stretch occupies residues 1 to 21 (MTKTLAEQPGEGAAPVSPSPS). The segment at residues 1-49 (MTKTLAEQPGEGAAPVSPSPSRRALLHGAAGLGALAAGAAVAGPGLAFA) is a signal peptide (tat-type signal).

The protein belongs to the peptidase S33 family. Post-translationally, predicted to be exported by the Tat system. The position of the signal peptide cleavage has not been experimentally proven.

The enzyme catalyses an epoxide + H2O = an ethanediol. The chain is Putative epoxide hydrolase from Stigmatella aurantiaca (strain DW4/3-1).